The sequence spans 196 residues: Holliday junction branch migration complex subunit RuvA (196 aa).

Positions 1-63 (MINKIYGKVI…ENELKLFGFL (63 aa)) are domain I. A domain II region spans residues 64–139 (NSDERETFKS…KLLINNELES (76 aa)). Position 139 (S139) is a region of interest, flexible linker. The domain III stretch occupies residues 139–196 (SSLFRFKELEESIVSMGFDRKIVNSKLKEAFNLVEFSNLKDSEKEQFLFKEVLKRMSN).

It belongs to the RuvA family. In terms of assembly, homotetramer. Forms an RuvA(8)-RuvB(12)-Holliday junction (HJ) complex. HJ DNA is sandwiched between 2 RuvA tetramers; dsDNA enters through RuvA and exits via RuvB. An RuvB hexamer assembles on each DNA strand where it exits the tetramer. Each RuvB hexamer is contacted by two RuvA subunits (via domain III) on 2 adjacent RuvB subunits; this complex drives branch migration. In the full resolvosome a probable DNA-RuvA(4)-RuvB(12)-RuvC(2) complex forms which resolves the HJ.

It localises to the cytoplasm. In terms of biological role, the RuvA-RuvB-RuvC complex processes Holliday junction (HJ) DNA during genetic recombination and DNA repair, while the RuvA-RuvB complex plays an important role in the rescue of blocked DNA replication forks via replication fork reversal (RFR). RuvA specifically binds to HJ cruciform DNA, conferring on it an open structure. The RuvB hexamer acts as an ATP-dependent pump, pulling dsDNA into and through the RuvAB complex. HJ branch migration allows RuvC to scan DNA until it finds its consensus sequence, where it cleaves and resolves the cruciform DNA. The protein is Holliday junction branch migration complex subunit RuvA of Borreliella afzelii (strain PKo) (Borrelia afzelii).